We begin with the raw amino-acid sequence, 285 residues long: Shikimate dehydrogenase (NADP(+)) (285 aa).

Shikimate is bound by residues 20–22 and Thr67; that span reads SLS. Lys71 serves as the catalytic Proton acceptor. Position 83 (Glu83) interacts with NADP(+). The shikimate site is built by Asn92 and Asp107. NADP(+) is bound by residues 132 to 136 and Leu230; that span reads GAGGA. Residue Tyr232 participates in shikimate binding. Gly253 lines the NADP(+) pocket.

Belongs to the shikimate dehydrogenase family. Homodimer.

It carries out the reaction shikimate + NADP(+) = 3-dehydroshikimate + NADPH + H(+). Its pathway is metabolic intermediate biosynthesis; chorismate biosynthesis; chorismate from D-erythrose 4-phosphate and phosphoenolpyruvate: step 4/7. In terms of biological role, involved in the biosynthesis of the chorismate, which leads to the biosynthesis of aromatic amino acids. Catalyzes the reversible NADPH linked reduction of 3-dehydroshikimate (DHSA) to yield shikimate (SA). In Salinibacter ruber (strain DSM 13855 / M31), this protein is Shikimate dehydrogenase (NADP(+)).